The primary structure comprises 349 residues: Quinolinate synthase (349 aa).

Iminosuccinate contacts are provided by His52 and Ser69. Position 114 (Cys114) interacts with [4Fe-4S] cluster. Iminosuccinate contacts are provided by residues Tyr140–Asn142 and Ser157. Residue Cys201 coordinates [4Fe-4S] cluster. Iminosuccinate contacts are provided by residues His227–Glu229 and Thr255. Cys300 is a [4Fe-4S] cluster binding site.

The protein belongs to the quinolinate synthase family. Type 2 subfamily. [4Fe-4S] cluster serves as cofactor.

The protein localises to the cytoplasm. The catalysed reaction is iminosuccinate + dihydroxyacetone phosphate = quinolinate + phosphate + 2 H2O + H(+). It participates in cofactor biosynthesis; NAD(+) biosynthesis; quinolinate from iminoaspartate: step 1/1. Functionally, catalyzes the condensation of iminoaspartate with dihydroxyacetone phosphate to form quinolinate. The chain is Quinolinate synthase from Mycobacterium bovis (strain BCG / Tokyo 172 / ATCC 35737 / TMC 1019).